Consider the following 656-residue polypeptide: Chaperone protein HtpG (656 aa).

An a; substrate-binding region spans residues 1-359 (MSAQVEQLEF…AEDMSLNVSR (359 aa)). Positions 360-575 (EILQQNRQIN…AFGITPALAR (216 aa)) are b. The interval 576–656 (IYRASGQDVP…LLADLLSRSM (81 aa)) is c.

Belongs to the heat shock protein 90 family. As to quaternary structure, homodimer.

The protein localises to the cytoplasm. Its function is as follows. Molecular chaperone. Has ATPase activity. The sequence is that of Chaperone protein HtpG from Mycobacterium leprae (strain TN).